The chain runs to 729 residues: Fatty acid oxidation complex subunit alpha (729 aa).

The segment at 1–189 (MLYKGDTLYL…KIGLVDGVVK (189 aa)) is enoyl-CoA hydratase/isomerase. Aspartate 296 is a binding site for substrate. Positions 311 to 729 (ETPKQAAVLG…ARPVGSLKTA (419 aa)) are 3-hydroxyacyl-CoA dehydrogenase. NAD(+) is bound by residues methionine 324, aspartate 343, 400–402 (VVE), lysine 407, and serine 429. Histidine 450 functions as the For 3-hydroxyacyl-CoA dehydrogenase activity in the catalytic mechanism. Asparagine 453 is a binding site for NAD(+). Residues asparagine 500 and tyrosine 660 each coordinate substrate. Residues 708 to 729 (RHNEPYYPPVEPARPVGSLKTA) are disordered.

It in the N-terminal section; belongs to the enoyl-CoA hydratase/isomerase family. This sequence in the C-terminal section; belongs to the 3-hydroxyacyl-CoA dehydrogenase family. As to quaternary structure, heterotetramer of two alpha chains (FadB) and two beta chains (FadA).

It catalyses the reaction a (3S)-3-hydroxyacyl-CoA + NAD(+) = a 3-oxoacyl-CoA + NADH + H(+). It carries out the reaction a (3S)-3-hydroxyacyl-CoA = a (2E)-enoyl-CoA + H2O. The catalysed reaction is a 4-saturated-(3S)-3-hydroxyacyl-CoA = a (3E)-enoyl-CoA + H2O. The enzyme catalyses (3S)-3-hydroxybutanoyl-CoA = (3R)-3-hydroxybutanoyl-CoA. It catalyses the reaction a (3Z)-enoyl-CoA = a 4-saturated (2E)-enoyl-CoA. It carries out the reaction a (3E)-enoyl-CoA = a 4-saturated (2E)-enoyl-CoA. Its pathway is lipid metabolism; fatty acid beta-oxidation. Functionally, involved in the aerobic and anaerobic degradation of long-chain fatty acids via beta-oxidation cycle. Catalyzes the formation of 3-oxoacyl-CoA from enoyl-CoA via L-3-hydroxyacyl-CoA. It can also use D-3-hydroxyacyl-CoA and cis-3-enoyl-CoA as substrate. This chain is Fatty acid oxidation complex subunit alpha, found in Salmonella choleraesuis (strain SC-B67).